The chain runs to 316 residues: MALLDDVKSELAAFEGDSPAAIKAQAAAMIRFGGGLRPVQNTYVIQAVFTSLDVAEWLKNTLRNTFGHEAEVNHLTRQTPNGPVETYVVLVTRNVVALALQTGLVDRRKQQVRGLPSEVVNGSIAQIKAAWRGAFMARGFLSDPGKASFLEIACPTEEAAMALCGVARRLGIQAKHRTLRSSERVTLKDPDAIERMLKLMGATRSAREWTGKRSDGEARGKANRLANFDDANMRRSAKAAAEASEKVQHAFEVLGDNIPDNLRQAGQLRIDHVDKSLEELGKIAEPQITKDAIAGRIRRLLQLAEKTEKARAAEGK.

The H-T-H motif DNA-binding region spans 276–309 (SLEELGKIAEPQITKDAIAGRIRRLLQLAEKTEK).

The protein belongs to the WhiA family.

Involved in cell division and chromosome segregation. The protein is Probable cell division protein WhiA of Bifidobacterium longum (strain NCC 2705).